The primary structure comprises 460 residues: Chromosomal replication initiator protein DnaA (460 aa).

The tract at residues 1-83 (MENIWLEAQT…EFHVADEKPE (83 aa)) is domain I, interacts with DnaA modulators. Residues 78-121 (ADEKPEAAPEEKPEKEGKPAREKEKDKDKEKEKDREKEKDKKEL) show a composition bias toward basic and acidic residues. Positions 78 to 122 (ADEKPEAAPEEKPEKEGKPAREKEKDKDKEKEKDREKEKDKKELV) are disordered. Positions 83–123 (EAAPEEKPEKEGKPAREKEKDKDKEKEKDREKEKDKKELVP) are domain II. The domain III, AAA+ region stretch occupies residues 124–340 (NLNPKYTFES…GMLIRLEAFA (217 aa)). Gly168, Gly170, Lys171, and Thr172 together coordinate ATP. Residues 341–460 (SLTGQEITLS…VEDIRKKLFT (120 aa)) form a domain IV, binds dsDNA region.

Belongs to the DnaA family. As to quaternary structure, oligomerizes as a right-handed, spiral filament on DNA at oriC.

It is found in the cytoplasm. In terms of biological role, plays an essential role in the initiation and regulation of chromosomal replication. ATP-DnaA binds to the origin of replication (oriC) to initiate formation of the DNA replication initiation complex once per cell cycle. Binds the DnaA box (a 9 base pair repeat at the origin) and separates the double-stranded (ds)DNA. Forms a right-handed helical filament on oriC DNA; dsDNA binds to the exterior of the filament while single-stranded (ss)DNA is stabiized in the filament's interior. The ATP-DnaA-oriC complex binds and stabilizes one strand of the AT-rich DNA unwinding element (DUE), permitting loading of DNA polymerase. After initiation quickly degrades to an ADP-DnaA complex that is not apt for DNA replication. Binds acidic phospholipids. The protein is Chromosomal replication initiator protein DnaA of Geobacter sp. (strain M21).